Here is a 280-residue protein sequence, read N- to C-terminus: Mesaconyl-C(4)-CoA hydratase (280 aa).

The protein belongs to the HTD2 family. Homodimer.

The enzyme catalyses (3S)-citramalyl-CoA = 3-methylfumaryl-CoA + H2O. Inhibited by 3-methylfumaryl-CoA concentrations above 0.3 mM. Involved in the glyoxylate assimilation cycle used to regenerate acetyl-CoA and produce pyruvate as universal precursor for biosynthesis. Catalyzes the hydration of 3-methylfumaryl-CoA (mesaconyl-C4-CoA) to (3S)-citramalyl-CoA. The polypeptide is Mesaconyl-C(4)-CoA hydratase (meh) (Chloroflexus aurantiacus (strain ATCC 29366 / DSM 635 / J-10-fl)).